Reading from the N-terminus, the 575-residue chain is Glycosyltransferase family 92 protein At1g27200 (575 aa).

A helical transmembrane segment spans residues 22–44 (FLSQRYLILCFCCFFVLLFFLSS). Residues 293–540 (LCVCTMLWNQ…TEAIEPPDWK (248 aa)) form the GT92 domain.

Belongs to the glycosyltransferase 92 family.

The protein localises to the membrane. The chain is Glycosyltransferase family 92 protein At1g27200 from Arabidopsis thaliana (Mouse-ear cress).